Reading from the N-terminus, the 422-residue chain is Serine--tRNA ligase (422 aa).

An L-serine-binding site is contributed by 231-233 (TSE). 262–264 (RQE) provides a ligand contact to ATP. Residue Glu285 coordinates L-serine. 349–352 (EISS) contributes to the ATP binding site. Ser384 provides a ligand contact to L-serine.

The protein belongs to the class-II aminoacyl-tRNA synthetase family. Type-1 seryl-tRNA synthetase subfamily. Homodimer. The tRNA molecule binds across the dimer.

The protein localises to the cytoplasm. The catalysed reaction is tRNA(Ser) + L-serine + ATP = L-seryl-tRNA(Ser) + AMP + diphosphate + H(+). It catalyses the reaction tRNA(Sec) + L-serine + ATP = L-seryl-tRNA(Sec) + AMP + diphosphate + H(+). Its pathway is aminoacyl-tRNA biosynthesis; selenocysteinyl-tRNA(Sec) biosynthesis; L-seryl-tRNA(Sec) from L-serine and tRNA(Sec): step 1/1. Its function is as follows. Catalyzes the attachment of serine to tRNA(Ser). Is also able to aminoacylate tRNA(Sec) with serine, to form the misacylated tRNA L-seryl-tRNA(Sec), which will be further converted into selenocysteinyl-tRNA(Sec). This Mycoplasma mycoides subsp. mycoides SC (strain CCUG 32753 / NCTC 10114 / PG1) protein is Serine--tRNA ligase.